The following is a 205-amino-acid chain: Probable GTP-binding protein EngB (205 aa).

The EngB-type G domain occupies 22–196 (NLPEVAFVGR…LKVLDEFIHK (175 aa)). GTP is bound by residues 30-37 (GRSNVGKS), 57-61 (GRTQL), 76-79 (DLPG), 143-146 (TKVD), and 175-177 (FSA). 2 residues coordinate Mg(2+): Ser37 and Thr59.

Belongs to the TRAFAC class TrmE-Era-EngA-EngB-Septin-like GTPase superfamily. EngB GTPase family. Mg(2+) is required as a cofactor.

Its function is as follows. Necessary for normal cell division and for the maintenance of normal septation. The sequence is that of Probable GTP-binding protein EngB from Desulforamulus reducens (strain ATCC BAA-1160 / DSM 100696 / MI-1) (Desulfotomaculum reducens).